Here is a 474-residue protein sequence, read N- to C-terminus: MESKALLLVALGVWLQSLTAFRGGVAAADGGRDFSDIESKFALRTPEDTAEDTCHLIPGLADSVSNCHFNHSSKTFVVIHGWTVTGMYESWVPKLVAALYKREPDSNVIVVDWLYRAQQHYPVSAGYTKLVGNDVARFINWLEEEFNYPLDNVHLLGYSLGAHAAGVAGSLTNKKVNRITGLDPAGPNFEYAEAPSRLSPDDADFVDVLHTFTRGSPGRSIGIQKPVGHVDIYPNGGTFQPGCNIGEAIRVIAEKGLGDVDQLVKCSHERSIHLFIDSLLNEENPSKAYRCNSKEAFEKGLCLSCRKNRCNNVGYEINKVRAKRSSKMYLKTRSQMPYKVFHYQVKIHFSGTENDKQNNQAFEISLYGTVAESENIPFTLPEVATNKTYSFLIYTEVDIGELLMMKLKWKNDSYFRWSDWWSSPSFVIEKIRVKAGETQKKVIFCAREKVSHLQKGKDAAVFVKCHDKSLKKSG.

The signal sequence occupies residues Met-1 to Ala-27. The interaction with GPIHBP1 stretch occupies residues Arg-32–Thr-53. A disulfide bond links Cys-54 and Cys-67. The N-linked (GlcNAc...) asparagine glycan is linked to Asn-70. Residue Tyr-121 is modified to 3'-nitrotyrosine. The active-site Nucleophile is the Ser-159. Asp-183 (charge relay system) is an active-site residue. 3'-nitrotyrosine is present on Tyr-191. Ca(2+)-binding residues include Ala-194, Arg-197, Ser-199, and Asp-202. The cysteines at positions 243 and 266 are disulfide-linked. The segment at Cys-243 to Cys-266 is essential for determining substrate specificity. Residue His-268 is the Charge relay system of the active site. Disulfide bonds link Cys-291–Cys-310 and Cys-302–Cys-305. A PLAT domain is found at Phe-341 to Lys-464. Tyr-343 bears the 3'-nitrotyrosine mark. Asn-386 carries an N-linked (GlcNAc...) asparagine glycan. The interval Trp-417–Trp-421 is important for interaction with lipoprotein particles. Positions Lys-430–Lys-434 are important for heparin binding. An interaction with GPIHBP1 region spans residues Ile-443–Asp-467. Cys-445 and Cys-465 are oxidised to a cystine.

It belongs to the AB hydrolase superfamily. Lipase family. Homodimer. Interacts with GPIHBP1 with 1:1 stoichiometry. Interacts with APOC2; the interaction activates LPL activity in the presence of lipids. Interaction with heparan sulfate proteoglycans is required to protect LPL against loss of activity. Associates with lipoprotein particles in blood plasma. Interacts with LMF1 and SEL1L; interaction with SEL1L is required to prevent aggregation of newly synthesized LPL in the endoplasmic reticulum (ER), and for normal export of LPL from the ER to the extracellular space. Interacts with SORL1; SORL1 acts as a sorting receptor, promoting LPL localization to endosomes and later to lysosomes, leading to degradation of newly synthesized LPL. In terms of processing, tyrosine nitration after lipopolysaccharide (LPS) challenge down-regulates the lipase activity.

The protein resides in the cell membrane. The protein localises to the secreted. It is found in the extracellular space. It localises to the extracellular matrix. It catalyses the reaction a triacylglycerol + H2O = a diacylglycerol + a fatty acid + H(+). It carries out the reaction a 1,2-diacyl-sn-glycero-3-phosphocholine + H2O = a 2-acyl-sn-glycero-3-phosphocholine + a fatty acid + H(+). The enzyme catalyses 1,2,3-tri-(9Z-octadecenoyl)-glycerol + H2O = di-(9Z)-octadecenoylglycerol + (9Z)-octadecenoate + H(+). The catalysed reaction is 1,2-di-(9Z-octadecenoyl)-sn-glycero-3-phosphocholine + H2O = (9Z-octadecenoyl)-sn-glycero-3-phosphocholine + (9Z)-octadecenoate + H(+). It catalyses the reaction 1,2,3-tributanoylglycerol + H2O = dibutanoylglycerol + butanoate + H(+). It carries out the reaction 1,2-dihexadecanoyl-sn-glycero-3-phosphocholine + H2O = hexadecanoyl-sn-glycero-3-phosphocholine + hexadecanoate + H(+). With respect to regulation, the apolipoprotein APOC2 acts as a coactivator of LPL activity. Ca(2+) binding promotes protein stability and formation of the active homodimer. Interaction with GPIHBP1 protects LPL against inactivation by ANGPTL4. Its function is as follows. Key enzyme in triglyceride metabolism. Catalyzes the hydrolysis of triglycerides from circulating chylomicrons and very low density lipoproteins (VLDL), and thereby plays an important role in lipid clearance from the blood stream, lipid utilization and storage. Although it has both phospholipase and triglyceride lipase activities it is primarily a triglyceride lipase with low but detectable phospholipase activity. Mediates margination of triglyceride-rich lipoprotein particles in capillaries. Recruited to its site of action on the luminal surface of vascular endothelium by binding to GPIHBP1 and cell surface heparan sulfate proteoglycans. The sequence is that of Lipoprotein lipase (Lpl) from Rattus norvegicus (Rat).